Consider the following 462-residue polypeptide: Cysteine--tRNA ligase (462 aa).

Cysteine 24 contributes to the Zn(2+) binding site. Residues proline 26–histidine 36 carry the 'HIGH' region motif. Zn(2+) is bound by residues cysteine 199, histidine 224, and glutamate 228. A 'KMSKS' region motif is present at residues lysine 256–serine 260. Lysine 259 lines the ATP pocket.

Belongs to the class-I aminoacyl-tRNA synthetase family. In terms of assembly, monomer. The cofactor is Zn(2+).

Its subcellular location is the cytoplasm. It catalyses the reaction tRNA(Cys) + L-cysteine + ATP = L-cysteinyl-tRNA(Cys) + AMP + diphosphate. The sequence is that of Cysteine--tRNA ligase from Campylobacter jejuni subsp. doylei (strain ATCC BAA-1458 / RM4099 / 269.97).